A 174-amino-acid chain; its full sequence is Gamma-crystallin C (174 aa).

Beta/gamma crystallin 'Greek key' domains follow at residues 2-40 (GKIT…RVDS) and 41-83 (GCWM…CLIP). Cys23 bears the S-methylcysteine mark. Positions 84 to 87 (QTSS) are connecting peptide. 2 consecutive Beta/gamma crystallin 'Greek key' domains span residues 88 to 128 (HRLR…HVLE) and 129 to 171 (GCWV…RRVV).

The protein belongs to the beta/gamma-crystallin family. As to quaternary structure, monomer.

Its function is as follows. Crystallins are the dominant structural components of the vertebrate eye lens. This is Gamma-crystallin C (CRYGC) from Canis lupus familiaris (Dog).